The chain runs to 279 residues: Biotin synthase (279 aa).

The 227-residue stretch at 1-227 (MKVYLCAISN…NAMIMVAGGR (227 aa)) folds into the Radical SAM core domain. Residues C16, C20, and C23 each contribute to the [4Fe-4S] cluster site. Positions 60, 95, and 153 each coordinate [2Fe-2S] cluster.

The protein belongs to the radical SAM superfamily. Biotin synthase family. In terms of assembly, homodimer. It depends on [4Fe-4S] cluster as a cofactor. The cofactor is [2Fe-2S] cluster.

The enzyme catalyses (4R,5S)-dethiobiotin + (sulfur carrier)-SH + 2 reduced [2Fe-2S]-[ferredoxin] + 2 S-adenosyl-L-methionine = (sulfur carrier)-H + biotin + 2 5'-deoxyadenosine + 2 L-methionine + 2 oxidized [2Fe-2S]-[ferredoxin]. The protein operates within cofactor biosynthesis; biotin biosynthesis; biotin from 7,8-diaminononanoate: step 2/2. Functionally, catalyzes the conversion of dethiobiotin (DTB) to biotin by the insertion of a sulfur atom into dethiobiotin via a radical-based mechanism. This is Biotin synthase from Nitratiruptor sp. (strain SB155-2).